Here is a 103-residue protein sequence, read N- to C-terminus: Small ribosomal subunit protein uS10 (103 aa).

This sequence belongs to the universal ribosomal protein uS10 family. In terms of assembly, part of the 30S ribosomal subunit.

Its function is as follows. Involved in the binding of tRNA to the ribosomes. The sequence is that of Small ribosomal subunit protein uS10 from Xanthomonas axonopodis pv. citri (strain 306).